We begin with the raw amino-acid sequence, 130 residues long: Holo-[acyl-carrier-protein] synthase (130 aa).

Aspartate 8 and glutamate 62 together coordinate Mg(2+).

Belongs to the P-Pant transferase superfamily. AcpS family. The cofactor is Mg(2+).

The protein localises to the cytoplasm. It catalyses the reaction apo-[ACP] + CoA = holo-[ACP] + adenosine 3',5'-bisphosphate + H(+). Its function is as follows. Transfers the 4'-phosphopantetheine moiety from coenzyme A to a Ser of acyl-carrier-protein. The sequence is that of Holo-[acyl-carrier-protein] synthase from Acidovorax ebreus (strain TPSY) (Diaphorobacter sp. (strain TPSY)).